A 328-amino-acid chain; its full sequence is Putative UDP-N-acetylglucosamine--dolichyl-phosphate N-acetylglucosaminephosphotransferase (328 aa).

Transmembrane regions (helical) follow at residues 1-21, 48-68, 78-98, 107-127, 129-149, 166-186, 192-212, 228-248, and 301-321; these read MLVSLLGILLSVIVGFVVTLI, VPVLGGIGIVAGFVAGSFTFL, IENVVVSILLSSLIIGFLGLL, ATRAFLPIFASIPLILYSVGH, IISIPFLGKVNFGILFYIIIL, LNGLGAGMGLIMALALAYIGL, SFYAGIVSIILASVLFGFLIF, FIGSVIGSIGISGYMYTALFF, and YHIVLIIWGIEILFAILAVVF.

It belongs to the glycosyltransferase 4 family.

It is found in the cell membrane. It catalyses the reaction a di-trans,poly-cis-dolichyl phosphate + UDP-N-acetyl-alpha-D-glucosamine = an N-acetyl-alpha-D-glucosaminyl-diphospho-di-trans,poly-cis-dolichol + UMP. With respect to regulation, inhibited by tunicamycin. The sequence is that of Putative UDP-N-acetylglucosamine--dolichyl-phosphate N-acetylglucosaminephosphotransferase (gnpTA) from Sulfolobus acidocaldarius (strain ATCC 33909 / DSM 639 / JCM 8929 / NBRC 15157 / NCIMB 11770).